Reading from the N-terminus, the 315-residue chain is Taste receptor type 2 member 3 (315 aa).

At Met-1–Glu-5 the chain is on the extracellular side. The chain crosses the membrane as a helical span at residues Gly-6–Ile-26. The Cytoplasmic segment spans residues Gly-27–Ser-41. Residues Leu-42 to Leu-62 traverse the membrane as a helical segment. At Thr-63–His-93 the chain is on the extracellular side. A helical membrane pass occupies residues Leu-94–Ser-114. Residues His-115 to Arg-127 are Cytoplasmic-facing. Residues Val-128–Ile-148 traverse the membrane as a helical segment. The Extracellular portion of the chain corresponds to Asn-149 to Thr-185. N-linked (GlcNAc...) asparagine glycosylation occurs at Asn-165. A helical transmembrane segment spans residues Leu-186–Leu-206. Residues Gly-207–Arg-233 are Cytoplasmic-facing. A helical membrane pass occupies residues Ile-234–Phe-254. Residues Gly-255–Lys-265 lie on the Extracellular side of the membrane. Residues Met-266–Gly-286 form a helical membrane-spanning segment. Topologically, residues Asn-287–Ser-315 are cytoplasmic.

The protein belongs to the G-protein coupled receptor T2R family.

The protein localises to the membrane. Its function is as follows. Gustducin-coupled receptor implicated in the perception of bitter compounds in the oral cavity and the gastrointestinal tract. Signals through PLCB2 and the calcium-regulated cation channel TRPM5. This chain is Taste receptor type 2 member 3 (TAS2R3), found in Pongo pygmaeus (Bornean orangutan).